Here is a 260-residue protein sequence, read N- to C-terminus: MACYIVPYYHHPVLSHPNREIFSHRHHHHHRFCNNLLNRRISVPRSSAISDGGVSYNTLVSEAVRLLVPQANFDSSKLKVEFLGELLENKSNGGIITPRTYILSHCDFTANLTLTISNVINLDQLEGWYKKDDVVAEWKKVNDELRLHIHCCVSGMSLLQDVAAELRYHIFSKELPLVLKAVVHGDSVMFRENPELMDAYVWVYFHSSTPKYNRIECWGPLKDAAKGKQQGNHQGFLSSTTSRKLIRHKSIFHTLFTFLL.

Residues 1 to 45 constitute a chloroplast transit peptide; it reads MACYIVPYYHHPVLSHPNREIFSHRHHHHHRFCNNLLNRRISVPR.

The protein belongs to the staygreen family. As to quaternary structure, interacts with the light harvesting complex II (LHCII). Interacts with the chlorophyll catabolic enzymes (CCEs) NYC1, NOL, PAO and RCCR. In terms of tissue distribution, expressed in cotyledons, pollen and young leaves.

Its subcellular location is the plastid. It is found in the chloroplast thylakoid. The catalysed reaction is chlorophyllide a + 2 H(+) = pheophorbide a + Mg(2+). Magnesium chelatase involved in chlorophyll a degradation in the chlorophyll-protein complexes of photosystem I (PSI) and photosystem II (PSII). Contributes to the degradation of PSI and PSII in the thylakoid membranes. Recombinant SGRL possesses high dechelating activity against chlorophyllide a, very low activity against chlorophyll a, and no activity against chlorophyll b. Contributes to abiotic stress-induced chlorophyll degradation and leaf yellowing during vegetative plant growth. The chain is Magnesium dechelatase SGRL, chloroplastic from Arabidopsis thaliana (Mouse-ear cress).